Reading from the N-terminus, the 282-residue chain is Undecaprenyl-diphosphatase (282 aa).

The next 5 membrane-spanning stretches (helical) occupy residues 90–110 (YRLG…GLFF), 121–141 (LWVV…AEYV), 194–214 (FGFL…LPDA), 228–248 (QLLV…AWLL), and 256–276 (MYWF…LLAT).

The protein belongs to the UppP family.

It localises to the cell membrane. It carries out the reaction di-trans,octa-cis-undecaprenyl diphosphate + H2O = di-trans,octa-cis-undecaprenyl phosphate + phosphate + H(+). Functionally, catalyzes the dephosphorylation of undecaprenyl diphosphate (UPP). Confers resistance to bacitracin. The chain is Undecaprenyl-diphosphatase from Mycobacterium tuberculosis (strain ATCC 25618 / H37Rv).